A 231-amino-acid chain; its full sequence is Thermonuclease (231 aa).

A signal peptide spans 1-26 (MLVMTEYLLSAGICMAIVSILLIGMA). 2 propeptides span residues 27–63 (ISNV…SANA) and 64–82 (SQTD…TVYS). Polar residues predominate over residues 61–73 (ANASQTDNGVNRS). The interval 61–86 (ANASQTDNGVNRSGSEDPTVYSATST) is disordered. Ca(2+) is bound at residue Asp103. The active site involves Arg117. 2 residues coordinate Ca(2+): Asp122 and Thr123. Residues Glu125 and Arg169 contribute to the active site. Positions 203–219 (HEQHLRKSEAQAKKEKL) are enriched in basic and acidic residues. The disordered stretch occupies residues 203-231 (HEQHLRKSEAQAKKEKLNIWSEDNADSGQ).

It belongs to the thermonuclease family. The cofactor is Ca(2+).

It is found in the secreted. Its subcellular location is the membrane. The catalysed reaction is Endonucleolytic cleavage to nucleoside 3'-phosphates and 3'-phosphooligonucleotide end-products.. Enzyme that catalyzes the hydrolysis of both DNA and RNA at the 5' position of the phosphodiester bond. The sequence is that of Thermonuclease from Staphylococcus aureus.